The primary structure comprises 451 residues: POU domain, class 3, transcription factor 1 (451 aa).

Disordered stretches follow at residues 1-21 (MATT…GTGP), 69-114 (AHPQ…GFHA), 134-154 (AHHL…HQPQ), 186-253 (GLHH…PSSD), and 395-451 (KRMT…GSVQ). Gly residues-rich tracts occupy residues 11 to 20 (GPGGGAGGTG), 76 to 85 (TGGGGGGDWA), and 95 to 112 (AGGG…GGGF). Residues 134–145 (AHHLGPAMSPSP) show a composition bias toward low complexity. Over residues 190 to 199 (ALHEDGHEAQ) the composition is skewed to basic and acidic residues. Over residues 220–232 (AGGLHAAAAHLHP) the composition is skewed to low complexity. Positions 247-321 (EDAPSSDDLE…LLNKWLEETD (75 aa)) constitute a POU-specific domain. Residues 339–398 (KRKKRTSIEVGVKGALESHFLKCPKPSAHEITGLADSLQLEKEVVRVWFCNRRQKEKRMT) constitute a DNA-binding region (homeobox). Over residues 427–436 (PSAPPPPPPA) the composition is skewed to pro residues.

This sequence belongs to the POU transcription factor family. Class-3 subfamily. As to expression, neural tissues and testis.

The protein resides in the nucleus. In terms of biological role, transcription factor that binds to the octamer motif (5'-ATTTGCAT-3'). Acts as a transcriptional activator when binding cooperatively with SOX4, SOX11, or SOX12 to gene promoters. Acts as a transcriptional repressor of myelin-specific genes. The chain is POU domain, class 3, transcription factor 1 (Pou3f1) from Rattus norvegicus (Rat).